The sequence spans 125 residues: uncharacterized protein (125 aa).

This is an uncharacterized protein from Aquifex aeolicus (strain VF5).